The sequence spans 318 residues: Pantothenate synthetase (318 aa).

44–51 (MGALHQGH) is a binding site for ATP. The Proton donor role is filled by His-51. Gln-75 is a binding site for (R)-pantoate. Gln-75 is a binding site for beta-alanine. Residue 161–164 (GEKD) coordinates ATP. Residue Gln-167 coordinates (R)-pantoate. ATP contacts are provided by residues Val-190 and 198 to 201 (LSSR). Positions 295–318 (DGHPNLDSQPEPAGTDPALLPPAR) are disordered.

The protein belongs to the pantothenate synthetase family. In terms of assembly, homodimer.

Its subcellular location is the cytoplasm. It carries out the reaction (R)-pantoate + beta-alanine + ATP = (R)-pantothenate + AMP + diphosphate + H(+). The protein operates within cofactor biosynthesis; (R)-pantothenate biosynthesis; (R)-pantothenate from (R)-pantoate and beta-alanine: step 1/1. Catalyzes the condensation of pantoate with beta-alanine in an ATP-dependent reaction via a pantoyl-adenylate intermediate. This Nocardia farcinica (strain IFM 10152) protein is Pantothenate synthetase.